A 252-amino-acid polypeptide reads, in one-letter code: Aspartate/glutamate leucyltransferase (252 aa).

The protein belongs to the R-transferase family. Bpt subfamily.

It localises to the cytoplasm. It carries out the reaction N-terminal L-glutamyl-[protein] + L-leucyl-tRNA(Leu) = N-terminal L-leucyl-L-glutamyl-[protein] + tRNA(Leu) + H(+). The catalysed reaction is N-terminal L-aspartyl-[protein] + L-leucyl-tRNA(Leu) = N-terminal L-leucyl-L-aspartyl-[protein] + tRNA(Leu) + H(+). Its function is as follows. Functions in the N-end rule pathway of protein degradation where it conjugates Leu from its aminoacyl-tRNA to the N-termini of proteins containing an N-terminal aspartate or glutamate. This Hyphomonas neptunium (strain ATCC 15444) protein is Aspartate/glutamate leucyltransferase.